Consider the following 336-residue polypeptide: Serpentine receptor class alpha-10 (336 aa).

Topologically, residues 1–28 are extracellular; that stretch reads MGPITANSSKCATEDQMILQTSLLLRIN. Residues 29–49 traverse the membrane as a helical segment; the sequence is VIIMTIVAIITFILTYKALFI. Over 50–61 the chain is Cytoplasmic; it reads LKIRPIFHSSTK. Residues 62 to 82 form a helical membrane-spanning segment; it reads ILLYTSLLFVNVHAVIFMVIQ. Residues 83–107 are Extracellular-facing; sequence NTALIRSFTLSDKPCEIMRTTLECR. The helical transmembrane segment at 108–128 threads the bilayer; the sequence is FQNHVLIFGIAGVNFNQFGLT. At 129-148 the chain is on the cytoplasmic side; sequence VDRLLATIIPQSYSHMGALP. The chain crosses the membrane as a helical span at residues 149–169; it reads GVILSVLVVACSIAAPLIIAI. Residues 170–192 lie on the Extracellular side of the membrane; it reads GDPYDDIVPNCFFFPEHSAPRAN. The helical transmembrane segment at 193 to 213 threads the bilayer; that stretch reads IFLVTLSTLVITSIFLNFIII. The Cytoplasmic segment spans residues 214 to 243; that stretch reads YANKKLEKGCRTRFYVTQRYQKREALISTR. The helical transmembrane segment at 244–264 threads the bilayer; the sequence is IISYIAASQFLGLTLYSTMVL. Residues 265 to 280 are Extracellular-facing; that stretch reads TLRLHKSMIPISIYHN. A helical transmembrane segment spans residues 281–301; the sequence is MVWWAYTVPFAAVSLPALLIY. Over 302 to 336 the chain is Cytoplasmic; the sequence is RINQVGSNRKRVINRITAKVETQEEHMKSLKELWA.

This sequence belongs to the nematode receptor-like protein sra family. As to expression, expressed in the URX sensory neuron, the ALA interneuron and in additional interneurons, pharyngeal neurons and muscle.

It localises to the membrane. This is Serpentine receptor class alpha-10 (sra-10) from Caenorhabditis elegans.